We begin with the raw amino-acid sequence, 345 residues long: Probable velvet family sexual development regulator LACBIDRAFT_317102 (345 aa).

2 stretches are compositionally biased toward polar residues: residues 1–13 (MFTT…SYRS) and 24–38 (EIQN…NPPR). Disordered regions lie at residues 1–43 (MFTT…TRRR), 138–189 (ESWT…SPSS), and 310–345 (RKRR…SDED). The region spanning 62–306 (GQTIRAELDE…ARWGVRLNIR (245 aa)) is the Velvet domain. Composition is skewed to low complexity over residues 141–158 (TSRS…PTLS) and 167–184 (SSPQ…ASTP). Residues 336–345 (SEDDEASDED) are compositionally biased toward acidic residues.

Belongs to the velvet family.

The protein localises to the nucleus. Its function is as follows. Velvet-domain-containing protein that probably acts as a positive regulator of sexual development. This is Probable velvet family sexual development regulator LACBIDRAFT_317102 from Laccaria bicolor (strain S238N-H82 / ATCC MYA-4686) (Bicoloured deceiver).